Here is a 142-residue protein sequence, read N- to C-terminus: Hemoglobin subunit alpha (142 aa).

The 142-residue stretch at 1–142 (GLTAADKTLI…VEKALFETYR (142 aa)) folds into the Globin domain. His59 is a binding site for O2. Position 88 (His88) interacts with heme b.

It belongs to the globin family. Heterotetramer of two alpha chains and two beta chains (an easy dimerization is also reported). As to expression, red blood cells.

Functionally, involved in oxygen transport from the lung to the various peripheral tissues. The polypeptide is Hemoglobin subunit alpha (HBA) (Latimeria chalumnae (Coelacanth)).